Reading from the N-terminus, the 432-residue chain is Glutamate-1-semialdehyde 2,1-aminomutase (432 aa).

At K265 the chain carries N6-(pyridoxal phosphate)lysine.

The protein belongs to the class-III pyridoxal-phosphate-dependent aminotransferase family. HemL subfamily. Homodimer. The cofactor is pyridoxal 5'-phosphate.

The protein localises to the cytoplasm. The catalysed reaction is (S)-4-amino-5-oxopentanoate = 5-aminolevulinate. Its pathway is porphyrin-containing compound metabolism; protoporphyrin-IX biosynthesis; 5-aminolevulinate from L-glutamyl-tRNA(Glu): step 2/2. The protein is Glutamate-1-semialdehyde 2,1-aminomutase of Photobacterium profundum (strain SS9).